The primary structure comprises 803 residues: Ribonuclease II, chloroplastic/mitochondrial (803 aa).

The N-terminal 35 residues, 1–35 (MMSVRAINGCSIIRTATSAGGPPVSLFRHRIQRLR), are a transit peptide targeting the chloroplast and mitochondrion. The RNB domain maps to 399 to 694 (RIDLTHLKVY…AHYQIKAFLR (296 aa)).

The protein belongs to the RNR ribonuclease family. In terms of tissue distribution, expressed in seedlings, roots, leaves and flowers.

It localises to the mitochondrion. It is found in the plastid. The protein resides in the chloroplast. It carries out the reaction Exonucleolytic cleavage in the 3'- to 5'-direction to yield nucleoside 5'-phosphates.. Its function is as follows. 3'-5' exoribonuclease that catalyzes 3' maturation of chloroplast and mitochondrion ribosomal RNAs; degrades short nucleotidic extensions to generate the mature 3'-ends. Involved in the maturation of 23S, 16S and 5S rRNAs. The chain is Ribonuclease II, chloroplastic/mitochondrial (RNR1) from Arabidopsis thaliana (Mouse-ear cress).